A 405-amino-acid polypeptide reads, in one-letter code: Serpin B12 (405 aa).

The tract at residues 64-83 (SQNESKEPDPCLKSNKQKAG) is disordered.

The protein belongs to the serpin family. Ov-serpin subfamily. As to quaternary structure, interacts with SLFN12; as part of a pathway regulating cell differentiation. May interact with USP14. In terms of tissue distribution, expressed in many tissues, including brain, bone marrow, lymph node, heart, lung, liver, pancreas, testis, ovary, and intestine.

It is found in the cytoplasm. Functionally, inhibits trypsin and plasmin, but not thrombin, coagulation factor Xa, or urokinase-type plasminogen activator. May play a role in cell differentiation. The protein is Serpin B12 (SERPINB12) of Homo sapiens (Human).